Here is a 337-residue protein sequence, read N- to C-terminus: Tetraacyldisaccharide 4'-kinase (337 aa).

Residue 55-62 coordinates ATP; that stretch reads NAGGTGKT.

Belongs to the LpxK family.

It catalyses the reaction a lipid A disaccharide + ATP = a lipid IVA + ADP + H(+). It participates in glycolipid biosynthesis; lipid IV(A) biosynthesis; lipid IV(A) from (3R)-3-hydroxytetradecanoyl-[acyl-carrier-protein] and UDP-N-acetyl-alpha-D-glucosamine: step 6/6. Functionally, transfers the gamma-phosphate of ATP to the 4'-position of a tetraacyldisaccharide 1-phosphate intermediate (termed DS-1-P) to form tetraacyldisaccharide 1,4'-bis-phosphate (lipid IVA). This chain is Tetraacyldisaccharide 4'-kinase, found in Dinoroseobacter shibae (strain DSM 16493 / NCIMB 14021 / DFL 12).